Here is a 515-residue protein sequence, read N- to C-terminus: SWI/SNF global transcription activator complex subunit snf59 (515 aa).

The tract at residues 1–226 (MEEEDITLEH…IHHVDSKNEE (226 aa)) is disordered. 5 stretches are compositionally biased toward basic and acidic residues: residues 7-37 (TLEH…DNSN), 50-59 (EEPKYHDNSN), 73-85 (EPEH…KEST), 94-103 (EEPKHHDNSN), and 116-125 (EEPKHHDSSN). Polar residues predominate over residues 126–136 (KESTNLDNSNM). The span at 140–226 (ENQKNFKIEE…IHHVDSKNEE (87 aa)) shows a compositional bias: basic and acidic residues.

Belongs to the RSC7/SWP82 family. SWP82 subfamily. Component of the SWI/SNF global transcription activator complex composed of at least arp9, arp42, snf5, snf22, snf30, snf59, sol1, ssr1, ssr2, ssr3, ssr4 and tfg3.

It localises to the nucleus. Component of the SWI/SNF complex, an ATP-dependent chromatin remodeling complex, which is required for the positive and negative regulation of gene expression of a large number of genes. It changes chromatin structure by altering DNA-histone contacts within a nucleosome, leading eventually to a change in nucleosome position, thus facilitating or repressing binding of gene-specific transcription factors. This chain is SWI/SNF global transcription activator complex subunit snf59 (snf59), found in Schizosaccharomyces pombe (strain 972 / ATCC 24843) (Fission yeast).